The primary structure comprises 898 residues: Protein argonaute 1 (898 aa).

The tract at residues 1 to 52 (MLALNAGSQYPGRGRGRGRGDGGNRVHKHDGINRYHGGFRGGRGGGGGGFRD) is disordered. The span at 18–33 (GRGDGGNRVHKHDGIN) shows a compositional bias: basic and acidic residues. Positions 38-50 (GFRGGRGGGGGGF) are enriched in gly residues. Residues 283–378 (KCSDEMRRLR…IFADRTKMSR (96 aa)) enclose the PAZ domain. The 342-residue stretch at 542-883 (FAMVKLRTKE…YARKYGSLKS (342 aa)) folds into the Piwi domain.

Belongs to the argonaute family.

The protein localises to the cytoplasm. Functionally, involved in RNA-mediated gene silencing (RNAi) of mobile elements and repeats including retroposons SLACS (Spliced Leader Associated Conserved Sequence), TATE (Telomere-Associated Transposable Element) and TAS-like sequences (Telomere Associated Sequence), and a family of 74-nucleotide long tandem repeats, CIR74. Predominantly binds to siRNAs derived from SLACS and TATE transposable elements and to a lesser extent to siRNAs from TAS-like and CIR74 elements. This Leishmania braziliensis protein is Protein argonaute 1.